The following is a 362-amino-acid chain: Sterol-4-alpha-carboxylate 3-dehydrogenase, decarboxylating (362 aa).

An N-acetylmethionine modification is found at M1. Residue Y161 is the Proton acceptor of the active site. Residue K165 participates in NAD(+) binding. A helical membrane pass occupies residues 287-307; it reads WMAYYLAFLLSLLVMVVSPLI. Residues 359-362 carry the Prevents secretion from ER motif; that stretch reads RKDK.

The protein belongs to the 3-beta-HSD family. Homodimer.

The protein resides in the endoplasmic reticulum membrane. It localises to the lipid droplet. It carries out the reaction a 3beta-hydroxysteroid-4alpha-carboxylate + NADP(+) = a 3-oxosteroid + CO2 + NADPH. It catalyses the reaction a 3beta-hydroxysteroid-4alpha-carboxylate + NAD(+) = a 3-oxosteroid + CO2 + NADH. The catalysed reaction is 4alpha-carboxyzymosterol + NADP(+) = zymosterone + CO2 + NADPH. The enzyme catalyses 4alpha-carboxy-4beta-methyl-5alpha-cholest-8-en-3beta-ol + NADP(+) = 4alpha-methyl-5alpha-cholest-8-en-3-one + CO2 + NADPH. It carries out the reaction 4alpha-carboxy-5alpha-cholest-8-ene-3beta-ol + NADP(+) = 5alpha-cholest-8-en-3-one + CO2 + NADPH. It catalyses the reaction 4beta-methylzymosterol-4alpha-carboxylate + NADP(+) = 3-dehydro-4-methylzymosterol + CO2 + NADPH. The catalysed reaction is 4beta-methylzymosterol-4alpha-carboxylate + NAD(+) = 3-dehydro-4-methylzymosterol + CO2 + NADH. The enzyme catalyses 4alpha-carboxy-5alpha-cholest-8-ene-3beta-ol + NAD(+) = 5alpha-cholest-8-en-3-one + CO2 + NADH. It carries out the reaction 4alpha-carboxy-4beta-methyl-5alpha-cholest-8-en-3beta-ol + NAD(+) = 4alpha-methyl-5alpha-cholest-8-en-3-one + CO2 + NADH. It catalyses the reaction 4alpha-carboxyzymosterol + NAD(+) = zymosterone + CO2 + NADH. It participates in steroid biosynthesis; zymosterol biosynthesis; zymosterol from lanosterol: step 4/6. Functionally, catalyzes the NAD(P)(+)-dependent oxidative decarboxylation of the C4 methyl groups of 4-alpha-carboxysterols in post-squalene cholesterol biosynthesis. Plays a role in the regulation of the endocytic trafficking of EGFR. The protein is Sterol-4-alpha-carboxylate 3-dehydrogenase, decarboxylating (Nsdhl) of Mus musculus (Mouse).